Here is a 408-residue protein sequence, read N- to C-terminus: MMIKIASITKVENGSIVTPKGFSAIGTAIGLKKEKKDLGAIVCDVPASCAAVYTTNQIQAAPLQVTKDSITTERKLQAIIVNSGNANACTGMKGLQDAYEMRVLGAEHFGVKENYVAVASTGVIGVPLPMDIIRKGIATLIPAKEENEAHSFSEAILTTDLITKETCYEMSIDGKKVMIAGVAKGSGMIHPNMATMLSFITTDAHIEHDVLQTALSQITNHTFNQITVDGDTSTNDMVIAMASGLSETKPINMEHADWETFVFALQKVCEDLAKKIAQDGEGATKLIEVNVLGAQTNEEAKKIAKQIVGSSLVKTAIHGEDPNWGRIISSIGQSEVAINPNTIEITLQSIAVLKNSEPQTFSEEEMKERLQEDEIVINVYLHLGEETGSAWGCDLSYEYVKINACYRT.

Substrate-binding residues include threonine 158, lysine 184, threonine 195, glutamate 281, asparagine 403, and threonine 408. The active-site Nucleophile is the threonine 195.

Belongs to the ArgJ family. Heterotetramer of two alpha and two beta chains.

It localises to the cytoplasm. It carries out the reaction N(2)-acetyl-L-ornithine + L-glutamate = N-acetyl-L-glutamate + L-ornithine. The catalysed reaction is L-glutamate + acetyl-CoA = N-acetyl-L-glutamate + CoA + H(+). It participates in amino-acid biosynthesis; L-arginine biosynthesis; L-ornithine and N-acetyl-L-glutamate from L-glutamate and N(2)-acetyl-L-ornithine (cyclic): step 1/1. The protein operates within amino-acid biosynthesis; L-arginine biosynthesis; N(2)-acetyl-L-ornithine from L-glutamate: step 1/4. Catalyzes two activities which are involved in the cyclic version of arginine biosynthesis: the synthesis of N-acetylglutamate from glutamate and acetyl-CoA as the acetyl donor, and of ornithine by transacetylation between N(2)-acetylornithine and glutamate. The polypeptide is Arginine biosynthesis bifunctional protein ArgJ (Bacillus thuringiensis subsp. konkukian (strain 97-27)).